A 966-amino-acid chain; its full sequence is Dynamin-like GTPase OPA1, mitochondrial (966 aa).

The N-terminal 86 residues, 1 to 86 (MLRAGSVVTC…GGHGYQQHRT (86 aa)), are a transit peptide targeting the mitochondrion. Residues 87–95 (FWVARLAAR) lie on the Mitochondrial matrix side of the membrane. The helical transmembrane segment at 96–112 (LLKLRYILLGSAVGGGY) threads the bilayer. The Mitochondrial intermembrane portion of the chain corresponds to 113–776 (TAKKTYDEWK…SVIADMVGPD (664 aa)). The interval 189 to 217 (ESALRAPDVPPASAAMADSGDKQFKKSSD) is disordered. The segment covering 207 to 217 (SGDKQFKKSSD) has biased composition (basic and acidic residues). Residues 213-259 (KKSSDKEKVDQLQEELLRTQLKYQRMLERLEKENKELRKVVLQKDDK) adopt a coiled-coil conformation. Residues 291–567 (QDHLPRVVVV…FWKMVRESVE (277 aa)) form the Dynamin-type G domain. The interval 301-308 (GDQSAGKT) is G1 motif. Residues Ser304, Gly306, Lys307, Thr308, Ser309, and Gly323 each coordinate GTP. Thr308 provides a ligand contact to Mg(2+). The G2 motif stretch occupies residues 327–330 (MMTR). Mg(2+)-binding residues include Thr329 and Asp404. The interval 404-407 (DLPG) is G3 motif. Residues 473–476 (TKVD) are G4 motif. 3 residues coordinate GTP: Lys474, Asp476, and Thr509. A G5 motif region spans residues 507-510 (VVTG). Stalk region stretches follow at residues 595–842 (DRNE…IKDT) and 880–934 (CNDV…VQLI). The segment at 742–862 (TDKPQWDAAI…QKALLHCNLC (121 aa)) is paddle region. Residues 777 to 787 (WKQRWMSWKNR) lie within the membrane without spanning it. Residues 788–966 (TPEQHTRNET…AFIEALHKEK (179 aa)) lie on the Mitochondrial intermembrane side of the membrane. A disulfide bridge links Cys862 with Cys880. A coiled-coil region spans residues 901–966 (RQQLTNTEVR…AFIEALHKEK (66 aa)).

Belongs to the TRAFAC class dynamin-like GTPase superfamily. Dynamin/Fzo/YdjA family. As to quaternary structure, oligomeric complex consisting of membrane-bound and soluble forms of OPA1. Cleaved by OMA1 or YME1L downstream of the transmembrane region in response to different signals to generate soluble forms. Cleaved by OMA1 at position S1 following stress conditions, generating the short soluble form (Dynamin-like GTPase OPA1, short form; S-OPA1).

Its subcellular location is the mitochondrion inner membrane. The protein resides in the mitochondrion intermembrane space. The enzyme catalyses GTP + H2O = GDP + phosphate + H(+). Functionally, dynamin-related GTPase that is essential for normal mitochondrial morphology by mediating fusion of the mitochondrial inner membranes, regulating cristae morphology and maintaining respiratory chain function. Exists in two forms: the transmembrane, long form (Dynamin-like GTPase OPA1, long form; L-OPA1), which is tethered to the inner mitochondrial membrane, and the short soluble form (Dynamin-like GTPase OPA1, short form; S-OPA1), which results from proteolytic cleavage and localizes in the intermembrane space. Both forms (L-OPA1 and S-OPA1) cooperate to catalyze the fusion of the mitochondrial inner membrane. The equilibrium between L-OPA1 and S-OPA1 is essential: excess levels of S-OPA1, produced by cleavage by OMA1 following loss of mitochondrial membrane potential, lead to an impaired equilibrium between L-OPA1 and S-OPA1, inhibiting mitochondrial fusion. The balance between L-OPA1 and S-OPA1 also influences cristae shape and morphology. Its role in mitochondrial morphology is required for mitochondrial genome maintenance. Constitutes the transmembrane long form (L-OPA1) that plays a central role in mitochondrial inner membrane fusion and cristae morphology. L-OPA1 and the soluble short form (S-OPA1) form higher-order helical assemblies that coordinate the fusion of mitochondrial inner membranes. Inner membrane-anchored L-OPA1 molecules initiate membrane remodeling by recruiting soluble S-OPA1 to rapidly polymerize into a flexible cylindrical scaffold encaging the mitochondrial inner membrane. Once at the membrane surface, the formation of S-OPA1 helices induce bilayer curvature. OPA1 dimerization through the paddle region, which inserts into cardiolipin-containing membrane, promotes GTP hydrolysis and the helical assembly of a flexible OPA1 lattice on the membrane, which drives membrane curvature and mitochondrial fusion. Plays a role in the maintenance and remodeling of mitochondrial cristae, some invaginations of the mitochondrial inner membrane that provide an increase in the surface area. Probably acts by forming helical filaments at the inside of inner membrane tubes with the shape and dimensions of crista junctions. In terms of biological role, constitutes the soluble short form (S-OPA1) generated by cleavage by OMA1, which plays a central role in mitochondrial inner membrane fusion and cristae morphology. The transmembrane long form (L-OPA1) and the S-OPA1 form higher-order helical assemblies that coordinate the fusion of mitochondrial inner membranes. Inner membrane-anchored L-OPA1 molecules initiate membrane remodeling by recruiting soluble S-OPA1 to rapidly polymerize into a flexible cylindrical scaffold encaging the mitochondrial inner membrane. Once at the membrane surface, the formation of S-OPA1 helices induce bilayer curvature. OPA1 dimerization through the paddle region, which inserts into cardiolipin-containing membrane, promotes GTP hydrolysis and the helical assembly of a flexible OPA1 lattice on the membrane, which drives membrane curvature and mitochondrial fusion. Excess levels of S-OPA1 produced by cleavage by OMA1 following stress conditions that induce loss of mitochondrial membrane potential, lead to an impaired equilibrium between L-OPA1 and S-OPA1, thereby inhibiting mitochondrial fusion. Plays a role in the maintenance and remodeling of mitochondrial cristae, some invaginations of the mitochondrial inner membrane that provide an increase in the surface area. Probably acts by forming helical filaments at the inside of inner membrane tubes with the shape and dimensions of crista junctions. The polypeptide is Dynamin-like GTPase OPA1, mitochondrial (Danio rerio (Zebrafish)).